Here is a 394-residue protein sequence, read N- to C-terminus: Na(+)/H(+) antiporter NhaA 2 (394 aa).

11 helical membrane-spanning segments follow: residues 13–33, 58–78, 93–113, 124–144, 153–173, 176–196, 208–228, 260–280, 291–311, 327–347, and 361–381; these read FGGV…NGFL, LILW…GLEL, IALP…IFWA, GWAI…MLLG, IFLL…IAIF, TKLS…LWVL, ILVT…ATIA, YFIL…GVQI, IFFG…YIFI, FYGV…VNSL, and LGIL…LLVF.

This sequence belongs to the NhaA Na(+)/H(+) (TC 2.A.33) antiporter family.

The protein resides in the cell inner membrane. The enzyme catalyses Na(+)(in) + 2 H(+)(out) = Na(+)(out) + 2 H(+)(in). Functionally, na(+)/H(+) antiporter that extrudes sodium in exchange for external protons. This is Na(+)/H(+) antiporter NhaA 2 from Campylobacter fetus subsp. fetus (strain 82-40).